The following is a 214-amino-acid chain: Adenylate kinase (214 aa).

10–15 provides a ligand contact to ATP; it reads GAGKGT. Residues 30 to 59 form an NMP region; that stretch reads STGDMLRAAIKAGSELGQKAKILMDMGQLV. AMP-binding positions include T31, R36, 57 to 59, 85 to 88, and Q92; these read QLV and GFPR. Residues 122–159 are LID; it reads GRRVHPASGRTYHIVYNPPKVEDKDDITGEDLILRADD. ATP-binding positions include R123 and 132–133; that span reads TY. R156 and R167 together coordinate AMP. Q200 is an ATP binding site.

It belongs to the adenylate kinase family. Monomer.

The protein localises to the cytoplasm. It catalyses the reaction AMP + ATP = 2 ADP. Its pathway is purine metabolism; AMP biosynthesis via salvage pathway; AMP from ADP: step 1/1. Its function is as follows. Catalyzes the reversible transfer of the terminal phosphate group between ATP and AMP. Plays an important role in cellular energy homeostasis and in adenine nucleotide metabolism. This chain is Adenylate kinase, found in Histophilus somni (strain 129Pt) (Haemophilus somnus).